Reading from the N-terminus, the 671-residue chain is DNA ligase (671 aa).

NAD(+) is bound by residues 32–36 (DAEYD), 81–82 (SL), and Glu-113. The active-site N6-AMP-lysine intermediate is the Lys-115. Residues Arg-136, Glu-173, Lys-290, and Lys-314 each coordinate NAD(+). Zn(2+) contacts are provided by Cys-408, Cys-411, Cys-426, and Cys-432. The 79-residue stretch at 593-671 (EIDSPFAGKT…EAEMIRLLGA (79 aa)) folds into the BRCT domain.

The protein belongs to the NAD-dependent DNA ligase family. LigA subfamily. The cofactor is Mg(2+). Mn(2+) is required as a cofactor.

The catalysed reaction is NAD(+) + (deoxyribonucleotide)n-3'-hydroxyl + 5'-phospho-(deoxyribonucleotide)m = (deoxyribonucleotide)n+m + AMP + beta-nicotinamide D-nucleotide.. In terms of biological role, DNA ligase that catalyzes the formation of phosphodiester linkages between 5'-phosphoryl and 3'-hydroxyl groups in double-stranded DNA using NAD as a coenzyme and as the energy source for the reaction. It is essential for DNA replication and repair of damaged DNA. In Salmonella typhi, this protein is DNA ligase.